The chain runs to 174 residues: Larval cuticle protein LCP-22 (174 aa).

An N-terminal signal peptide occupies residues Met-1–Ala-16. The 72-residue stretch at Asp-82–Pro-153 folds into the Chitin-binding type R&amp;R domain.

Component of the cuticle of the larva of Bombyx mori. The polypeptide is Larval cuticle protein LCP-22 (LCP22) (Bombyx mori (Silk moth)).